Here is a 119-residue protein sequence, read N- to C-terminus: Large ribosomal subunit protein bL19 (119 aa).

This sequence belongs to the bacterial ribosomal protein bL19 family.

Its function is as follows. This protein is located at the 30S-50S ribosomal subunit interface and may play a role in the structure and function of the aminoacyl-tRNA binding site. The protein is Large ribosomal subunit protein bL19 of Borreliella afzelii (strain PKo) (Borrelia afzelii).